A 328-amino-acid chain; its full sequence is Gonadotropin-releasing hormone receptor (328 aa).

At 1-38 the chain is on the extracellular side; sequence MQDDTSSEQNPTHCSAINSSVPLVQGALPTLTLSGKIR. A glycan (N-linked (GlcNAc...) asparagine) is linked at Asn18. A helical membrane pass occupies residues 39–59; sequence VTVTFFLFLVSTTLNASFLLK. Topologically, residues 60–84 are cytoplasmic; it reads LQKWTQKKEKGKKLSRMKVLLKHLT. Residues 85–105 form a helical membrane-spanning segment; sequence LANLLETLIVMPLDGMWNITV. Residues 106 to 115 lie on the Extracellular side of the membrane; sequence QWYAGELLCK. The cysteines at positions 114 and 196 are disulfide-linked. The helical transmembrane segment at 116-136 threads the bilayer; the sequence is ILSYLKLFSMYAPAFMMVVIS. Residues 137–160 are Cytoplasmic-facing; it reads LDRSMAITRPLPVQSNRKLEQSMT. A helical membrane pass occupies residues 161–181; the sequence is GLAWGLSSVLAGPQLYIFKMI. Over 182-208 the chain is Extracellular; sequence HLENGPGQTEVFSQCVTHCSFPQWWHQ. A helical membrane pass occupies residues 209 to 229; the sequence is AFYNFFTFICLFIIPLLIMLI. Topologically, residues 230–271 are cytoplasmic; that stretch reads CNAKIIFTLTQVLQQDSNKLQLNQSKNNIPRARLRTLKMTVA. The chain crosses the membrane as a helical span at residues 272–292; sequence FAASFIVCWTPYYVLGLWYWF. Topologically, residues 293 to 306 are extracellular; it reads DPGMLHRMSEPVNH. Residues 307-327 form a helical membrane-spanning segment; sequence FFFLFAFLNPCFDPLIYGYFS. Leu328 is a topological domain (cytoplasmic).

It belongs to the G-protein coupled receptor 1 family.

It is found in the cell membrane. Receptor for gonadotropin releasing hormone (GnRH) that mediates the action of GnRH to stimulate the secretion of the gonadotropic hormones luteinizing hormone (LH) and follicle-stimulating hormone (FSH). This receptor mediates its action by association with G-proteins that activate a phosphatidylinositol-calcium second messenger system. The chain is Gonadotropin-releasing hormone receptor (GNRHR) from Cavia porcellus (Guinea pig).